The chain runs to 307 residues: N-acetylmuramic acid 6-phosphate etherase (307 aa).

An SIS domain is found at 59 to 222 (TTKALSQGGK…STGVMVRLGK (164 aa)). The active-site Proton donor is the Glu-87. The active site involves Glu-118.

It belongs to the GCKR-like family. MurNAc-6-P etherase subfamily. Homodimer.

It carries out the reaction N-acetyl-D-muramate 6-phosphate + H2O = N-acetyl-D-glucosamine 6-phosphate + (R)-lactate. It functions in the pathway amino-sugar metabolism; N-acetylmuramate degradation. Specifically catalyzes the cleavage of the D-lactyl ether substituent of MurNAc 6-phosphate, producing GlcNAc 6-phosphate and D-lactate. This is N-acetylmuramic acid 6-phosphate etherase from Trichodesmium erythraeum (strain IMS101).